Reading from the N-terminus, the 600-residue chain is Aspartate--tRNA(Asp/Asn) ligase (600 aa).

E174 provides a ligand contact to L-aspartate. The aspartate stretch occupies residues Q198 to K201. R220 lines the L-aspartate pocket. ATP-binding positions include R220–E222 and Q229. H457 serves as a coordination point for L-aspartate. Position 491 (E491) interacts with ATP. An L-aspartate-binding site is contributed by R498. Residue G543–R546 coordinates ATP.

The protein belongs to the class-II aminoacyl-tRNA synthetase family. Type 1 subfamily. As to quaternary structure, homodimer.

The protein resides in the cytoplasm. It catalyses the reaction tRNA(Asx) + L-aspartate + ATP = L-aspartyl-tRNA(Asx) + AMP + diphosphate. Functionally, aspartyl-tRNA synthetase with relaxed tRNA specificity since it is able to aspartylate not only its cognate tRNA(Asp) but also tRNA(Asn). Reaction proceeds in two steps: L-aspartate is first activated by ATP to form Asp-AMP and then transferred to the acceptor end of tRNA(Asp/Asn). This chain is Aspartate--tRNA(Asp/Asn) ligase, found in Burkholderia ambifaria (strain ATCC BAA-244 / DSM 16087 / CCUG 44356 / LMG 19182 / AMMD) (Burkholderia cepacia (strain AMMD)).